The chain runs to 326 residues: Microtubule-associated protein RP/EB family member 2 (326 aa).

Ser9 is subject to Phosphoserine. The Calponin-homology (CH) domain occupies 56-158; the sequence is TMSRHDIIAW…FIQWFKKFYD (103 aa). Phosphotyrosine is present on Tyr166. 2 disordered regions span residues 170-239 and 297-326; these read EARQ…DKDL and YASDEQEGQTEEPEAEEQAHDQQPQQQEEY. The DCTN1-binding stretch occupies residues 186–326; that stretch reads QIFNLPKKSH…DQQPQQQEEY (141 aa). Over residues 199-233 the composition is skewed to low complexity; that stretch reads SPTAGAAKSSPASKPGSTPSRPSSAKRASSSGSAS. 2 positions are modified to phosphoserine: Ser218 and Ser235. The EB1 C-terminal domain occupies 235-305; it reads SDKDLETQVI…LYASDEQEGQ (71 aa). The APC-binding stretch occupies residues 258-301; that stretch reads EGVEKERDFYFGKLREIELLCQEHGQENDDLVQRLMEVLYASDE. Acidic residues predominate over residues 300 to 312; sequence DEQEGQTEEPEAE. Residues 317–326 show a composition bias toward low complexity; that stretch reads DQQPQQQEEY.

The protein belongs to the MAPRE family. In terms of assembly, interacts with DCTN1. Interacts with APC (via C-terminal). Interacts with monomeric and polymerized tubulin. Interacts with SLAIN1. Interacts (via the N-terminal region) with BAG1. Interacts with ASB14. Post-translationally, ubiquitinated in an ASB14-dependent manner; leading to proteasomal degradation. In terms of processing, phosphorylated at Ser-235 by CK2 leading to enhanced cell adhesion. Phosphorylated by CDK1 and AURKB during mitosis reduces the binding affinity of MAPRE2 for microtubules. In terms of tissue distribution, expressed during early stages of apico-basal epithelial differentiation but down-regulated in most cells at later stages.

The protein localises to the cytoplasm. The protein resides in the cytoskeleton. It is found in the spindle. In terms of biological role, adapter protein that is involved in microtubule polymerization, and spindle function by stabilizing microtubules and anchoring them at centrosomes. Therefore, ensures mitotic progression and genome stability. Acts as a central regulator of microtubule reorganization in apico-basal epithelial differentiation. Plays a role during oocyte meiosis by regulating microtubule dynamics. Participates in neurite growth by interacting with plexin B3/PLXNB3 and microtubule reorganization during apico-basal epithelial differentiation. Plays also an essential role for cell migration and focal adhesion dynamics. Mechanistically, recruits HAX1 to microtubules in order to regulate focal adhesion dynamics. The polypeptide is Microtubule-associated protein RP/EB family member 2 (Mapre2) (Mus musculus (Mouse)).